The sequence spans 344 residues: Alkyl hydroperoxide reductase Rv2159c (344 aa).

Residues 49 to 50 (AG) form an important for interaction with PknI region. Catalysis depends on Cys-84, which acts as the Cysteine sulfenic acid (-SOH) intermediate.

It belongs to the AhpD family. In terms of assembly, interacts with the serine/threonine-protein kinase PknI. The PknI-Rv2159c interaction is mediated through phosphorylation independent physical interaction.

Interaction with PknI increases the peroxidase activity by several folds. In terms of biological role, involved in protection against oxidative stresses. May play a significant role in maintaining the cellular homeostasis during stress and virulence of M.tuberculosis. In vitro, catalyzes the decomposition of cumene hydroperoxide (CHP) to acetophenone. The chain is Alkyl hydroperoxide reductase Rv2159c from Mycobacterium tuberculosis (strain ATCC 25618 / H37Rv).